The chain runs to 424 residues: MKKSQELMTRAKRVIPGGVNSPVRAFNAVGGCPRFIKSASGAYIQDVEGNSYIDYIGSWGPMILGHSNPKILQAVSKVMIKGLSFGAATELEVEMAELITRLVPSVEMVRMVNSGTEAVMSALRLARGYTKREKVIKFAGCYHGHSDSMLVKAGSGALVNGVPDSAGVTIGVAKDTLVAEYNDIDSVNLLFEQNKNEIAAVILEPVAANMGVVLPKDGFLEKVRQLCSQNGALLIFDEVITGFRLAAGGAQEYFGVTADLVTYGKIIGGGMPVGAYGGRREIMECISPIGPVYQAGTLSGNPLAMAAGITMLTELSENPQIYEHINRLGTKLGDGLRKITSNTVNSVGSLISMFMTENEVIDIRSAMASDTGEYSRLFNHLLNKGIYIAPAQFEAMFISNAHTDEDIEKTLSAIEESLNEMRKK.

An N6-(pyridoxal phosphate)lysine modification is found at Lys265.

Belongs to the class-III pyridoxal-phosphate-dependent aminotransferase family. HemL subfamily. As to quaternary structure, homodimer. Pyridoxal 5'-phosphate serves as cofactor.

It is found in the cytoplasm. It catalyses the reaction (S)-4-amino-5-oxopentanoate = 5-aminolevulinate. It functions in the pathway porphyrin-containing compound metabolism; protoporphyrin-IX biosynthesis; 5-aminolevulinate from L-glutamyl-tRNA(Glu): step 2/2. The sequence is that of Glutamate-1-semialdehyde 2,1-aminomutase from Alkaliphilus oremlandii (strain OhILAs) (Clostridium oremlandii (strain OhILAs)).